A 331-amino-acid polypeptide reads, in one-letter code: Cytoskeleton protein RodZ (331 aa).

Over 1-111 (MNTEATQDHQ…LGKRRKKRDG (111 aa)) the chain is Cytoplasmic. Residues 19–71 (LRHAREQLGLSQQAVAERLCLKVSTVRDIEDDKAPADLASTFLRGYIRSYARL) form the HTH cro/C1-type domain. A DNA-binding region (H-T-H motif) is located at residues 30-49 (QQAVAERLCLKVSTVRDIED). The chain crosses the membrane as a helical; Signal-anchor for type II membrane protein span at residues 112 to 132 (WLMSFTWLVLFVVIGLSGAWW). Over 133–331 (WQDHKAQQEE…TLNAESSPAQ (199 aa)) the chain is Periplasmic. The span at 146 to 166 (MADQSSAELNGGDANSQNVPL) shows a compositional bias: polar residues. The segment at 146–238 (MADQSSAELN…ASPLPTDQAN (93 aa)) is disordered. 2 stretches are compositionally biased toward low complexity: residues 167–202 (DTSA…TPAD) and 216–234 (TAGT…PLPT).

The protein belongs to the RodZ family.

The protein resides in the cell inner membrane. Functionally, cytoskeletal protein that is involved in cell-shape control through regulation of the length of the long axis. The protein is Cytoskeleton protein RodZ of Klebsiella pneumoniae subsp. pneumoniae (strain ATCC 700721 / MGH 78578).